Here is a 569-residue protein sequence, read N- to C-terminus: Probable protein phosphatase 2C BIPP2C1 (569 aa).

2 disordered regions span residues 166–212 and 251–279; these read GSSN…SSKV and SLDD…GSSI. Positions 174–183 are enriched in low complexity; the sequence is SEVGVESECG. In terms of domain architecture, PPM-type phosphatase spans 329–564; sequence AAMLPHPSKV…DDVTVVVSVV (236 aa). Mn(2+)-binding residues include Asp-358, Gly-359, Asp-488, and Asp-555.

This sequence belongs to the PP2C family. It depends on Mg(2+) as a cofactor. Mn(2+) is required as a cofactor.

The enzyme catalyses O-phospho-L-seryl-[protein] + H2O = L-seryl-[protein] + phosphate. It catalyses the reaction O-phospho-L-threonyl-[protein] + H2O = L-threonyl-[protein] + phosphate. Functionally, may play a role in responses to biotic and abiotic stresses. The sequence is that of Probable protein phosphatase 2C BIPP2C1 (BIPP2C1) from Oryza sativa subsp. indica (Rice).